The chain runs to 342 residues: Nucleoid-associated protein Shewana3_2426 (342 aa).

It belongs to the YejK family.

Its subcellular location is the cytoplasm. It is found in the nucleoid. The polypeptide is Nucleoid-associated protein Shewana3_2426 (Shewanella sp. (strain ANA-3)).